Here is a 215-residue protein sequence, read N- to C-terminus: MTALPSSAPPLLAAHALTYSRNAIPILGPLHFHINPGEALIVQGPNGIGKTTLLRILAGLLHSDSGHIHINTHHNTTAPERTRHIAYLSHLPGLKQDLSALENLHFLNALHGCHPQRTPSNALTIVGLTDHAQTLVRQLSAGQKKRLSLARLWLSPAPLWLLDEPYANLDPEGITLLNHILTTHLHTQGGTLLTTPGALPTLPVPTRLLHLQKAP.

The region spanning 12–215 (LAAHALTYSR…TRLLHLQKAP (204 aa)) is the ABC transporter domain. 44–51 (GPNGIGKT) is an ATP binding site.

The protein belongs to the ABC transporter superfamily. CcmA exporter (TC 3.A.1.107) family. In terms of assembly, the complex is composed of two ATP-binding proteins (CcmA) and two transmembrane proteins (CcmB).

Its subcellular location is the cell inner membrane. It catalyses the reaction heme b(in) + ATP + H2O = heme b(out) + ADP + phosphate + H(+). Its function is as follows. Part of the ABC transporter complex CcmAB involved in the biogenesis of c-type cytochromes; once thought to export heme, this seems not to be the case, but its exact role is uncertain. Responsible for energy coupling to the transport system. This Xylella fastidiosa (strain Temecula1 / ATCC 700964) protein is Cytochrome c biogenesis ATP-binding export protein CcmA.